Reading from the N-terminus, the 308-residue chain is Ribosomal RNA small subunit methyltransferase H (308 aa).

Residues 35-37, aspartate 54, phenylalanine 80, aspartate 101, and glutamine 108 contribute to the S-adenosyl-L-methionine site; that span reads GGH.

Belongs to the methyltransferase superfamily. RsmH family.

The protein localises to the cytoplasm. The catalysed reaction is cytidine(1402) in 16S rRNA + S-adenosyl-L-methionine = N(4)-methylcytidine(1402) in 16S rRNA + S-adenosyl-L-homocysteine + H(+). In terms of biological role, specifically methylates the N4 position of cytidine in position 1402 (C1402) of 16S rRNA. This Mycoplasma pneumoniae (strain ATCC 29342 / M129 / Subtype 1) (Mycoplasmoides pneumoniae) protein is Ribosomal RNA small subunit methyltransferase H.